Here is a 318-residue protein sequence, read N- to C-terminus: Biotin synthase (318 aa).

A Radical SAM core domain is found at Leu-44–Arg-273. [4Fe-4S] cluster contacts are provided by Cys-62, Cys-66, and Cys-69. [2Fe-2S] cluster is bound by residues Ser-106, Cys-138, Cys-198, and Arg-268.

The protein belongs to the radical SAM superfamily. Biotin synthase family. In terms of assembly, homodimer. [4Fe-4S] cluster is required as a cofactor. Requires [2Fe-2S] cluster as cofactor.

The catalysed reaction is (4R,5S)-dethiobiotin + (sulfur carrier)-SH + 2 reduced [2Fe-2S]-[ferredoxin] + 2 S-adenosyl-L-methionine = (sulfur carrier)-H + biotin + 2 5'-deoxyadenosine + 2 L-methionine + 2 oxidized [2Fe-2S]-[ferredoxin]. It participates in cofactor biosynthesis; biotin biosynthesis; biotin from 7,8-diaminononanoate: step 2/2. Functionally, catalyzes the conversion of dethiobiotin (DTB) to biotin by the insertion of a sulfur atom into dethiobiotin via a radical-based mechanism. This is Biotin synthase from Clostridium botulinum (strain Langeland / NCTC 10281 / Type F).